The following is a 347-amino-acid chain: Microfibril-associated glycoprotein 3 (347 aa).

Residues 1 to 22 (MKLHYCLCILLVVTFVPTALVL) form the signal peptide. At 23 to 139 (EDVTPLGTNQ…TLRVIFTSGD (117 aa)) the chain is on the extracellular side. N-linked (GlcNAc...) asparagine glycans are attached at residues N31, N36, N63, and N103. Positions 47-130 (AGSYSGDDVI…SPTRASYSVT (84 aa)) constitute an Ig-like C2-type domain. A disulfide bond links C68 and C117. A helical membrane pass occupies residues 140–160 (MSVYYMVVCLIAFTITLILNV). Topologically, residues 161 to 347 (TRLCLMSTHL…SAEGSTHHRE (187 aa)) are cytoplasmic. Positions 280–347 (NPELGRSNSP…SAEGSTHHRE (68 aa)) are disordered. Residues 311-331 (VHLQSETKSIGTDSQDSSHFS) show a composition bias toward polar residues.

Post-translationally, glycosylated.

The protein resides in the cell membrane. Its function is as follows. Component of the elastin-associated microfibrils. This is Microfibril-associated glycoprotein 3 (Mfap3) from Rattus norvegicus (Rat).